The primary structure comprises 123 residues: Ribosome-binding factor A (123 aa).

This sequence belongs to the RbfA family. Monomer. Binds 30S ribosomal subunits, but not 50S ribosomal subunits or 70S ribosomes.

It is found in the cytoplasm. Its function is as follows. One of several proteins that assist in the late maturation steps of the functional core of the 30S ribosomal subunit. Associates with free 30S ribosomal subunits (but not with 30S subunits that are part of 70S ribosomes or polysomes). Required for efficient processing of 16S rRNA. May interact with the 5'-terminal helix region of 16S rRNA. This is Ribosome-binding factor A from Neisseria gonorrhoeae (strain NCCP11945).